The sequence spans 279 residues: 1D-myo-inositol 2-acetamido-2-deoxy-alpha-D-glucopyranoside deacetylase (279 aa).

H12, D15, and H146 together coordinate Zn(2+).

The protein belongs to the MshB deacetylase family. Zn(2+) serves as cofactor.

It catalyses the reaction 1D-myo-inositol 2-acetamido-2-deoxy-alpha-D-glucopyranoside + H2O = 1D-myo-inositol 2-amino-2-deoxy-alpha-D-glucopyranoside + acetate. In terms of biological role, catalyzes the deacetylation of 1D-myo-inositol 2-acetamido-2-deoxy-alpha-D-glucopyranoside (GlcNAc-Ins) in the mycothiol biosynthesis pathway. The polypeptide is 1D-myo-inositol 2-acetamido-2-deoxy-alpha-D-glucopyranoside deacetylase (Mycobacteroides abscessus (strain ATCC 19977 / DSM 44196 / CCUG 20993 / CIP 104536 / JCM 13569 / NCTC 13031 / TMC 1543 / L948) (Mycobacterium abscessus)).